Reading from the N-terminus, the 282-residue chain is Bis(5'-nucleosyl)-tetraphosphatase, symmetrical (282 aa).

It belongs to the Ap4A hydrolase family.

It catalyses the reaction P(1),P(4)-bis(5'-adenosyl) tetraphosphate + H2O = 2 ADP + 2 H(+). In terms of biological role, hydrolyzes diadenosine 5',5'''-P1,P4-tetraphosphate to yield ADP. This Klebsiella pneumoniae (strain 342) protein is Bis(5'-nucleosyl)-tetraphosphatase, symmetrical.